The sequence spans 112 residues: uncharacterized protein (112 aa).

An N-terminal signal peptide occupies residues 1-21; sequence MKTLFTSVVLCGALVVSSSFA. HhH domains are found at residues 49 to 79 and 80 to 109; these read DKLN…IVQY and REKH…NRDR.

This is an uncharacterized protein from Haemophilus influenzae (strain ATCC 51907 / DSM 11121 / KW20 / Rd).